Consider the following 171-residue polypeptide: Ribosome maturation factor RimP (171 aa).

It belongs to the RimP family.

It is found in the cytoplasm. Its function is as follows. Required for maturation of 30S ribosomal subunits. This chain is Ribosome maturation factor RimP, found in Oleidesulfovibrio alaskensis (strain ATCC BAA-1058 / DSM 17464 / G20) (Desulfovibrio alaskensis).